A 106-amino-acid polypeptide reads, in one-letter code: UPF0145 protein PputW619_2377 (106 aa).

The protein belongs to the UPF0145 family.

The polypeptide is UPF0145 protein PputW619_2377 (Pseudomonas putida (strain W619)).